The following is a 287-amino-acid chain: MKRVMLFLATNLAVVLVLSVVLNIVYAVTGMQPGSLSGLLVMAAVFGFGGSFISLMMSKKMALRSVGGMVIESPRNETEHWLMETVSRQSQQVGIGMPTVAIYDSPDINAFATGAKRNDSLVAVSTGLLHNMTRDEAEAVLAHEVSHIANGDMVTMTLMQGVVNTFVIFLSRFIANIVASNDNEEEGGSNMMVYFGVSMVLELVFGFLASFITMWYSRHREFHADADAAHLVGKEKMIAALERLKVSHEPQLEGSMMAFGINGKKSLTELLMSHPPLDKRIASLRNM.

A run of 2 helical transmembrane segments spans residues 4–24 (VMLF…VLNI) and 36–56 (LSGL…ISLM). His143 provides a ligand contact to Zn(2+). Residue Glu144 is part of the active site. His147 contacts Zn(2+). 2 consecutive transmembrane segments (helical) span residues 158 to 178 (LMQG…ANIV) and 192 to 212 (MVYF…ASFI). Glu221 contributes to the Zn(2+) binding site.

Belongs to the peptidase M48B family. The cofactor is Zn(2+).

It is found in the cell inner membrane. In Vibrio atlanticus (strain LGP32) (Vibrio splendidus (strain Mel32)), this protein is Protease HtpX.